We begin with the raw amino-acid sequence, 200 residues long: MANKGPAYGMSRDVQSKIEKKYDDELEDRLVEWIVAQCGSSVGRPDRGRLGFQVWLKNGIVLSQLVNSLYPDGSKPVKIPDSPPTMVFKQMEQIAQFLKAAEDYGVVKTDMFQTVDLFEAKDMAAVQRTLVALGSLAVTKNDGHYHGDPNWFMKKAQEHKREFSESQLKEGKNIIGLQMGTNKGASQAGMSYGRPRQIIS.

A2 carries the N-acetylalanine modification. Residues 24–137 form the Calponin-homology (CH) domain; sequence DELEDRLVEW…RTLVALGSLA (114 aa). Residues 175-199 form a Calponin-like repeat; the sequence is IGLQMGTNKGASQAGMSYGRPRQII.

This sequence belongs to the calponin family. In terms of assembly, monomer. In terms of tissue distribution, gizzard, uterus, intestine, esophagus, aorta, and trace amounts in brain, liver and heart.

The protein resides in the cytoplasm. In terms of biological role, actin cross-linking/gelling protein. The sequence is that of Transgelin (TAGLN) from Gallus gallus (Chicken).